We begin with the raw amino-acid sequence, 359 residues long: Peptide chain release factor 1 (359 aa).

At Q235 the chain carries N5-methylglutamine. Positions 280–306 are disordered; it reads AERQRADSERSADRKSQVGSGDRSERI.

Belongs to the prokaryotic/mitochondrial release factor family. Methylated by PrmC. Methylation increases the termination efficiency of RF1.

It localises to the cytoplasm. Its function is as follows. Peptide chain release factor 1 directs the termination of translation in response to the peptide chain termination codons UAG and UAA. The protein is Peptide chain release factor 1 of Rhizobium johnstonii (strain DSM 114642 / LMG 32736 / 3841) (Rhizobium leguminosarum bv. viciae).